The chain runs to 185 residues: Intraflagellar transport protein 22 homolog (185 aa).

Residues 10–17 (GPCESGKT), 63–67 (DCGGD), and 123–126 (HKPG) each bind GTP. Ser-137 carries the post-translational modification Phosphoserine.

It belongs to the small GTPase superfamily. Rab family. Component of the IFT complex B, at least composed of IFT20, IFT22, IFT25, IFT27, IFT46, IFT52, TRAF3IP1/IFT54, IFT57, IFT74, IFT80, IFT81, and IFT88. Interacts with IFT88. Interacts with CFAP61.

It is found in the cell projection. The protein localises to the cilium. Its function is as follows. Small GTPase-like component of the intraflagellar transport (IFT) complex B. The chain is Intraflagellar transport protein 22 homolog (Ift22) from Mus musculus (Mouse).